A 254-amino-acid chain; its full sequence is Bowman-Birk type bran trypsin inhibitor (254 aa).

Residues 1-22 (MSNTTMATSTILLFLLAGLAAA) form the signal peptide. The propeptide occupies 23–118 (HGDGDTTIRL…KCTAALDGLS (96 aa)). Repeats lie at residues 46–120 (KPWD…LSME), 121–187 (RPWK…LCTP), and 188–251 (RPWG…CKPR). Intrachain disulfides connect Cys-51/Cys-248, Cys-125/Cys-185, Cys-126/Cys-143, Cys-152/Cys-159, Cys-156/Cys-172, Cys-193/Cys-248, Cys-194/Cys-209, Cys-199/Cys-207, Cys-216/Cys-223, and Cys-220/Cys-236. Positions 252–254 (AEN) are excised as a propeptide.

This sequence belongs to the Bowman-Birk serine protease inhibitor family. Expressed in roots, leaves and flowers.

The sequence is that of Bowman-Birk type bran trypsin inhibitor (RBBI3.3) from Oryza sativa subsp. indica (Rice).